The primary structure comprises 155 residues: SsrA-binding protein (155 aa).

This sequence belongs to the SmpB family.

The protein resides in the cytoplasm. Its function is as follows. Required for rescue of stalled ribosomes mediated by trans-translation. Binds to transfer-messenger RNA (tmRNA), required for stable association of tmRNA with ribosomes. tmRNA and SmpB together mimic tRNA shape, replacing the anticodon stem-loop with SmpB. tmRNA is encoded by the ssrA gene; the 2 termini fold to resemble tRNA(Ala) and it encodes a 'tag peptide', a short internal open reading frame. During trans-translation Ala-aminoacylated tmRNA acts like a tRNA, entering the A-site of stalled ribosomes, displacing the stalled mRNA. The ribosome then switches to translate the ORF on the tmRNA; the nascent peptide is terminated with the 'tag peptide' encoded by the tmRNA and targeted for degradation. The ribosome is freed to recommence translation, which seems to be the essential function of trans-translation. The sequence is that of SsrA-binding protein from Gloeothece citriformis (strain PCC 7424) (Cyanothece sp. (strain PCC 7424)).